The sequence spans 287 residues: tRNA selenocysteine 1-associated protein 1 (287 aa).

RRM domains follow at residues 3-86 and 96-175; these read ASLW…YVTY and YSLF…VAIP.

Belongs to the RRM TRSPAP family. Component of the tRNA(Sec) complex composed at least of EEFSEC, SECISBP2, SEPHS1, SEPSECS, TRNAU1AP and tRNA(Sec). Found in a complex with tRNA(Sec). Interacts with SEPSECS. Associates with mRNP and/or polysomes. Found in a complex with EEFSEC, SECISBP2, TRNAU1AP and tRNA(Sec).

The protein resides in the nucleus. The protein localises to the cytoplasm. Involved in the early steps of selenocysteine biosynthesis and tRNA(Sec) charging to the later steps resulting in the cotranslational incorporation of selenocysteine into selenoproteins. Stabilizes the SECISBP2, EEFSEC and tRNA(Sec) complex. May be involved in the methylation of tRNA(Sec). Enhances efficiency of selenoproteins synthesis. The polypeptide is tRNA selenocysteine 1-associated protein 1 (TRNAU1AP) (Pongo abelii (Sumatran orangutan)).